Consider the following 431-residue polypeptide: Glucose-1-phosphate adenylyltransferase (431 aa).

Residue Lys-39 coordinates beta-D-fructose 1,6-bisphosphate. Residues Arg-40, His-46, and Arg-52 each coordinate AMP. Alpha-D-glucose 1-phosphate is bound at residue Tyr-114. Arg-130 provides a ligand contact to AMP. Alpha-D-glucose 1-phosphate is bound by residues Gly-179, 194 to 195 (EK), and Ser-212. The AMP site is built by Glu-370 and Arg-386. Beta-D-fructose 1,6-bisphosphate contacts are provided by residues 419–423 (REMLR) and 429–431 (QER).

Belongs to the bacterial/plant glucose-1-phosphate adenylyltransferase family. Homotetramer.

The catalysed reaction is alpha-D-glucose 1-phosphate + ATP + H(+) = ADP-alpha-D-glucose + diphosphate. It functions in the pathway glycan biosynthesis; glycogen biosynthesis. Allosterically activated by fructose-1,6-bisphosphate (F16BP) and inhibited by AMP. Functionally, involved in the biosynthesis of ADP-glucose, a building block required for the elongation reactions to produce glycogen. Catalyzes the reaction between ATP and alpha-D-glucose 1-phosphate (G1P) to produce pyrophosphate and ADP-Glc. The sequence is that of Glucose-1-phosphate adenylyltransferase from Escherichia coli O45:K1 (strain S88 / ExPEC).